Consider the following 295-residue polypeptide: Pyridoxal 5'-phosphate synthase subunit PdxS (295 aa).

Asp-25 provides a ligand contact to D-ribose 5-phosphate. Lys-82 acts as the Schiff-base intermediate with D-ribose 5-phosphate in catalysis. Gly-154 provides a ligand contact to D-ribose 5-phosphate. Arg-166 contributes to the D-glyceraldehyde 3-phosphate binding site. D-ribose 5-phosphate contacts are provided by residues Gly-215 and 236 to 237; that span reads GS.

It belongs to the PdxS/SNZ family. In the presence of PdxT, forms a dodecamer of heterodimers.

It catalyses the reaction aldehydo-D-ribose 5-phosphate + D-glyceraldehyde 3-phosphate + L-glutamine = pyridoxal 5'-phosphate + L-glutamate + phosphate + 3 H2O + H(+). Its pathway is cofactor biosynthesis; pyridoxal 5'-phosphate biosynthesis. Functionally, catalyzes the formation of pyridoxal 5'-phosphate from ribose 5-phosphate (RBP), glyceraldehyde 3-phosphate (G3P) and ammonia. The ammonia is provided by the PdxT subunit. Can also use ribulose 5-phosphate and dihydroxyacetone phosphate as substrates, resulting from enzyme-catalyzed isomerization of RBP and G3P, respectively. The protein is Pyridoxal 5'-phosphate synthase subunit PdxS of Actinobacillus pleuropneumoniae serotype 7 (strain AP76).